We begin with the raw amino-acid sequence, 422 residues long: Dihydroorotase (422 aa).

Residues histidine 57 and histidine 59 each coordinate Zn(2+). Residues 59 to 61 (HLR) and asparagine 91 each bind substrate. Positions 149, 176, and 229 each coordinate Zn(2+). Residue asparagine 275 participates in substrate binding. Residue aspartate 302 participates in Zn(2+) binding. Residue aspartate 302 is part of the active site. Residues histidine 306 and 320 to 321 (FG) contribute to the substrate site.

Belongs to the metallo-dependent hydrolases superfamily. DHOase family. Class I DHOase subfamily. Zn(2+) serves as cofactor.

The catalysed reaction is (S)-dihydroorotate + H2O = N-carbamoyl-L-aspartate + H(+). It functions in the pathway pyrimidine metabolism; UMP biosynthesis via de novo pathway; (S)-dihydroorotate from bicarbonate: step 3/3. Functionally, catalyzes the reversible cyclization of carbamoyl aspartate to dihydroorotate. The sequence is that of Dihydroorotase from Endomicrobium trichonymphae.